Consider the following 137-residue polypeptide: Nucleoside diphosphate kinase (137 aa).

Lys-9, Phe-58, Arg-86, Thr-92, Arg-103, and Asn-113 together coordinate ATP. The Pros-phosphohistidine intermediate role is filled by His-121.

Belongs to the NDK family. As to quaternary structure, homotetramer. Requires Mg(2+) as cofactor.

It localises to the cytoplasm. The enzyme catalyses a 2'-deoxyribonucleoside 5'-diphosphate + ATP = a 2'-deoxyribonucleoside 5'-triphosphate + ADP. It catalyses the reaction a ribonucleoside 5'-diphosphate + ATP = a ribonucleoside 5'-triphosphate + ADP. Its function is as follows. Major role in the synthesis of nucleoside triphosphates other than ATP. The ATP gamma phosphate is transferred to the NDP beta phosphate via a ping-pong mechanism, using a phosphorylated active-site intermediate. The polypeptide is Nucleoside diphosphate kinase (Streptococcus pneumoniae (strain Hungary19A-6)).